Here is a 530-residue protein sequence, read N- to C-terminus: uncharacterized protein (530 aa).

Belongs to the mimivirus R640 family.

This is an uncharacterized protein from Acanthamoeba polyphaga (Amoeba).